A 110-amino-acid chain; its full sequence is Large ribosomal subunit protein uL22 (110 aa).

It belongs to the universal ribosomal protein uL22 family. As to quaternary structure, part of the 50S ribosomal subunit.

Its function is as follows. This protein binds specifically to 23S rRNA; its binding is stimulated by other ribosomal proteins, e.g. L4, L17, and L20. It is important during the early stages of 50S assembly. It makes multiple contacts with different domains of the 23S rRNA in the assembled 50S subunit and ribosome. In terms of biological role, the globular domain of the protein is located near the polypeptide exit tunnel on the outside of the subunit, while an extended beta-hairpin is found that lines the wall of the exit tunnel in the center of the 70S ribosome. The polypeptide is Large ribosomal subunit protein uL22 (Delftia acidovorans (strain DSM 14801 / SPH-1)).